A 328-amino-acid polypeptide reads, in one-letter code: UPF0421 protein SSP0904 (328 aa).

The next 4 helical transmembrane spans lie at 26 to 46, 61 to 81, 84 to 104, and 132 to 152; these read LFCLALNLNPIFAILTAIVTI, LPATIIGALFAVIFTFIFGDQ, FAYALSATFTIILCTKLNLHV, and LLTAIIGLVTAGLVNFIILPP.

The protein belongs to the UPF0421 family.

The protein localises to the cell membrane. This is UPF0421 protein SSP0904 from Staphylococcus saprophyticus subsp. saprophyticus (strain ATCC 15305 / DSM 20229 / NCIMB 8711 / NCTC 7292 / S-41).